The sequence spans 483 residues: Arginine/agmatine antiporter (483 aa).

The next 12 helical transmembrane spans lie at 11 to 31 (ILGTLALTGIVISSMIGGGIF), 41 to 61 (ASAGAVMLAWMLSGIGIFFIA), 85 to 105 (GFGPYVGFTIAWGYWLCQIFG), 124 to 144 (YFAGGNTIPAILLGSLLIWIF), 157 to 177 (FVNIIGAVCTLIPLLLFILIT), 208 to 228 (STMLVTLWAFIGIEGAVVISG), 239 to 259 (ATILGFSGCLLIYVLLSLLPF), 289 to 309 (VLMNTGLLIAVLTSWLSWTIL), 336 to 356 (PSFSLFMTSGLMQITMLLVYF), 364 to 384 (MLEITGVMVLPAYLTSSLFLV), 415 to 435 (LWLIYAGGLQHLFMVAILLAL), and 458 to 478 (EILKMTIVALAALLAIFLFSA).

This sequence belongs to the amino acid-polyamine-organocation (APC) superfamily. Basic amino acid/polyamine antiporter (APA) (TC 2.A.3.2) family.

It localises to the cell inner membrane. In terms of biological role, catalyzes the exchange of L-arginine for agmatine. The arginine uptake by the bacterium in the macrophage may be a virulence factor against the host innate immune response. The sequence is that of Arginine/agmatine antiporter (aaxC) from Chlamydia trachomatis serovar A (strain ATCC VR-571B / DSM 19440 / HAR-13).